We begin with the raw amino-acid sequence, 162 residues long: Nucleotide-binding protein SCO4614 (162 aa).

Belongs to the YajQ family.

It localises to the cytoplasm. The protein localises to the nucleoid. Functionally, nucleotide-binding protein. The chain is Nucleotide-binding protein SCO4614 from Streptomyces coelicolor (strain ATCC BAA-471 / A3(2) / M145).